The chain runs to 138 residues: MIRTMFKSKIHRATVTHANLHYVGSVTVDKDLLDAADILPGELVAIVDVTNGSRLETYTIEGQAGSGVIGINGAAAHLVNIGDTVILISYAQMTTAEAREYLPSIVHVDAANKIVQLGTDPAEALTEGLNRPPFSTTA.

Residue serine 25 is the Schiff-base intermediate with substrate; via pyruvic acid of the active site. Serine 25 carries the pyruvic acid (Ser) modification. Threonine 57 is a substrate binding site. Residue tyrosine 58 is the Proton donor of the active site. Residue 73 to 75 (GAA) coordinates substrate.

Belongs to the PanD family. As to quaternary structure, heterooctamer of four alpha and four beta subunits. It depends on pyruvate as a cofactor. Post-translationally, is synthesized initially as an inactive proenzyme, which is activated by self-cleavage at a specific serine bond to produce a beta-subunit with a hydroxyl group at its C-terminus and an alpha-subunit with a pyruvoyl group at its N-terminus.

The protein localises to the cytoplasm. The enzyme catalyses L-aspartate + H(+) = beta-alanine + CO2. It functions in the pathway cofactor biosynthesis; (R)-pantothenate biosynthesis; beta-alanine from L-aspartate: step 1/1. Its function is as follows. Catalyzes the pyruvoyl-dependent decarboxylation of aspartate to produce beta-alanine. The chain is Aspartate 1-decarboxylase from Renibacterium salmoninarum (strain ATCC 33209 / DSM 20767 / JCM 11484 / NBRC 15589 / NCIMB 2235).